The sequence spans 501 residues: Glutamyl-tRNA(Gln) amidotransferase subunit A (501 aa).

Active-site charge relay system residues include Lys-84 and Ser-159. Ser-183 acts as the Acyl-ester intermediate in catalysis.

Belongs to the amidase family. GatA subfamily. In terms of assembly, heterotrimer of A, B and C subunits.

The catalysed reaction is L-glutamyl-tRNA(Gln) + L-glutamine + ATP + H2O = L-glutaminyl-tRNA(Gln) + L-glutamate + ADP + phosphate + H(+). Functionally, allows the formation of correctly charged Gln-tRNA(Gln) through the transamidation of misacylated Glu-tRNA(Gln) in organisms which lack glutaminyl-tRNA synthetase. The reaction takes place in the presence of glutamine and ATP through an activated gamma-phospho-Glu-tRNA(Gln). This is Glutamyl-tRNA(Gln) amidotransferase subunit A from Streptomyces avermitilis (strain ATCC 31267 / DSM 46492 / JCM 5070 / NBRC 14893 / NCIMB 12804 / NRRL 8165 / MA-4680).